The primary structure comprises 509 residues: MESESESSSTHSSCDRFLDAEDEFFYDSFSNHYDCLNSSPPANLRRRRLPMDTDSSSSSSTSSLESCEKRSTVGENDELEVSLVDFETIEIDVDVTDSANSSIDSISEKGEDFEVIDSCTDTEKNMGENDSGRVDPFTVTTLNDERGEIYTGPEYTSTDWSLTSLVIRSIEFQVSLMITFIRFPPWLISKCLSFVFDPYRTMRRGRRYLVSWIVGLCDSGLKDDKPVLELVRRVTWGLFCAVYVGIMLFALLVSAFMISGFVITYLAHEPLVIKESLNFDYTKSSPEAYVPISSCAGVAFGLSGKESIETGKVKGLKDRTEITVSMTLPESEYNRNLGMFQVRVDFLSASGHVLASSRRPCMVKFSSEPIRLVQTLLKIAPLVTGYVSEIQTLNLKLKGLVEKDIIPTACLKIMIEQRAEFRPGAGIPEIYDASLFLESKLPFLKRIIWNWRKTLFVWISMSLFIMELLFALVFFRPLIIPRTGQRTQQRDGTHSINNNLYLDGQAGSR.

The segment at 33 to 73 is disordered; that stretch reads YDCLNSSPPANLRRRRLPMDTDSSSSSSTSSLESCEKRSTV. Over residues 52–63 the composition is skewed to low complexity; the sequence is DTDSSSSSSTSS. Transmembrane regions (helical) follow at residues 238–258 and 455–475; these read LFCA…AFMI and LFVW…LVFF.

Belongs to the seipin family. As to expression, expressed in seeds, seedlings, leaves, stems and roots. Not detected in flowers.

The protein resides in the endoplasmic reticulum membrane. Its function is as follows. Involved in lipid metabolism and lipid droplet (LD) morphology, number, and size. Supports the formation of small-sized LDs and modulates triacylglycerol accumulation. Induces probably a reorganization of the endoplasmic reticulum into LD-forming domains. The sequence is that of Seipin-3 from Arabidopsis thaliana (Mouse-ear cress).